The chain runs to 63 residues: Sarcotoxin-1A (63 aa).

A signal peptide spans M1–A23. Residue R62 is modified to Arginine amide.

The protein belongs to the cecropin family.

The protein localises to the secreted. Its function is as follows. Sarcotoxins, which are potent bactericidal proteins, are produced in response to injury. They are cytotoxic to both Gram-positive and Gram-negative bacteria. The polypeptide is Sarcotoxin-1A (Sarcophaga peregrina (Flesh fly)).